A 239-amino-acid chain; its full sequence is Putative 3-methyladenine DNA glycosylase (239 aa).

It belongs to the DNA glycosylase MPG family.

In Pseudomonas aeruginosa (strain UCBPP-PA14), this protein is Putative 3-methyladenine DNA glycosylase.